Reading from the N-terminus, the 91-residue chain is PqqA binding protein (91 aa).

The protein belongs to the PqqD family. As to quaternary structure, monomer. Interacts with PqqE.

Its pathway is cofactor biosynthesis; pyrroloquinoline quinone biosynthesis. In terms of biological role, functions as a PqqA binding protein and presents PqqA to PqqE, in the pyrroloquinoline quinone (PQQ) biosynthetic pathway. The polypeptide is PqqA binding protein (Pseudomonas putida (strain W619)).